The following is a 295-amino-acid chain: GTPase Era (295 aa).

Positions 5 to 172 (YCGYAAIIGR…EQAVHQLMPE (168 aa)) constitute an Era-type G domain. Residues 13–20 (GRPNVGKS) form a G1 region. 13–20 (GRPNVGKS) is a GTP binding site. The interval 39-43 (QTTRY) is G2. Positions 60–63 (DTPG) are G3. GTP contacts are provided by residues 60 to 64 (DTPGL) and 121 to 124 (NKVD). The interval 121 to 124 (NKVD) is G4. Residues 151-153 (LSA) are G5. Residues 203-279 (LGQEIPYSLA…FLQLWVKVKS (77 aa)) form the KH type-2 domain.

Belongs to the TRAFAC class TrmE-Era-EngA-EngB-Septin-like GTPase superfamily. Era GTPase family. Monomer.

Its subcellular location is the cytoplasm. It localises to the cell inner membrane. Functionally, an essential GTPase that binds both GDP and GTP, with rapid nucleotide exchange. Plays a role in 16S rRNA processing and 30S ribosomal subunit biogenesis and possibly also in cell cycle regulation and energy metabolism. The sequence is that of GTPase Era from Coxiella burnetii (strain RSA 331 / Henzerling II).